A 114-amino-acid polypeptide reads, in one-letter code: uncharacterized protein (114 aa).

Positions 1 to 114 (MSTAASSRMR…HASQSPDTAY (114 aa)) are disordered. Over residues 32–43 (CRRVPSRPCRPV) the composition is skewed to low complexity.

This is an uncharacterized protein from Human adenovirus B serotype 7 (HAdV-7).